A 479-amino-acid polypeptide reads, in one-letter code: Glycogen synthase (479 aa).

ADP-alpha-D-glucose is bound at residue Lys15.

It belongs to the glycosyltransferase 1 family. Bacterial/plant glycogen synthase subfamily.

It carries out the reaction [(1-&gt;4)-alpha-D-glucosyl](n) + ADP-alpha-D-glucose = [(1-&gt;4)-alpha-D-glucosyl](n+1) + ADP + H(+). It participates in glycan biosynthesis; glycogen biosynthesis. In terms of biological role, synthesizes alpha-1,4-glucan chains using ADP-glucose. The protein is Glycogen synthase of Acidiphilium cryptum (strain JF-5).